Here is a 281-residue protein sequence, read N- to C-terminus: MNYIGAHVSSSGGLEKTVLRAIQIKATAFSFFTKNQRQWFSPPLIQKKIDQFKAMCIKYSFQPQQILPHSSYLINLGHPIDELLRKSRKSFIDEMIRCSQLGLIFLNFHPGSHLNKITENACLLRVSDSINIALEKTQNVIAVIENTAGQGTNIGYCFEHLSEIIKNIDDKSRVGVCIDTCHLFASGYDLRTKKDCENTFEKFNSLIGLKYLKGIHLNDSKKKINSRVDRHESLGLGEIGTAAFTWIIKNENFSNIPIILETANPMIWEEEIDWLRSQKKL.

Zn(2+) is bound by residues histidine 69, histidine 109, glutamate 145, aspartate 179, histidine 182, histidine 216, aspartate 229, histidine 231, and glutamate 261.

This sequence belongs to the AP endonuclease 2 family. Requires Zn(2+) as cofactor.

It carries out the reaction Endonucleolytic cleavage to 5'-phosphooligonucleotide end-products.. Its function is as follows. Endonuclease IV plays a role in DNA repair. It cleaves phosphodiester bonds at apurinic or apyrimidinic (AP) sites, generating a 3'-hydroxyl group and a 5'-terminal sugar phosphate. In Buchnera aphidicola subsp. Acyrthosiphon pisum (strain APS) (Acyrthosiphon pisum symbiotic bacterium), this protein is Probable endonuclease 4.